The chain runs to 101 residues: Small ribosomal subunit protein uS14 (101 aa).

It belongs to the universal ribosomal protein uS14 family. Part of the 30S ribosomal subunit. Contacts proteins S3 and S10.

Its function is as follows. Binds 16S rRNA, required for the assembly of 30S particles and may also be responsible for determining the conformation of the 16S rRNA at the A site. The protein is Small ribosomal subunit protein uS14 of Hyphomonas neptunium (strain ATCC 15444).